The following is a 312-amino-acid chain: Methionyl-tRNA formyltransferase (312 aa).

(6S)-5,6,7,8-tetrahydrofolate is bound at residue 113–116 (SILP).

This sequence belongs to the Fmt family.

It catalyses the reaction L-methionyl-tRNA(fMet) + (6R)-10-formyltetrahydrofolate = N-formyl-L-methionyl-tRNA(fMet) + (6S)-5,6,7,8-tetrahydrofolate + H(+). Functionally, attaches a formyl group to the free amino group of methionyl-tRNA(fMet). The formyl group appears to play a dual role in the initiator identity of N-formylmethionyl-tRNA by promoting its recognition by IF2 and preventing the misappropriation of this tRNA by the elongation apparatus. The chain is Methionyl-tRNA formyltransferase from Hydrogenovibrio crunogenus (strain DSM 25203 / XCL-2) (Thiomicrospira crunogena).